The primary structure comprises 258 residues: Synaptosomal-associated protein 29 (258 aa).

The interval 1 to 43 is disordered; that stretch reads MSAYPRSYNPFDEDAEDEDARPAPWSDSRDLADGPGAPADRQQ. 3 positions are modified to phosphoserine: Ser-65, Ser-77, and Ser-114. Residues 76 to 107 adopt a coiled-coil conformation; the sequence is VSAEELVRQRGALERTEKMVDKMEQDLKTSQK. 2 disordered regions span residues 127–147 and 161–188; these read PAET…GRLK and QASH…SSEA. Thr-130 and Thr-137 each carry phosphothreonine. Polar residues predominate over residues 131-142; sequence PSAQNGTLTPQP. Phosphoserine occurs at positions 163, 182, 185, 204, and 210. Positions 196-258 constitute a t-SNARE coiled-coil homology domain; it reads RACHQRIDSN…TSTERKVRQL (63 aa).

The protein belongs to the SNAP-25 family. As to quaternary structure, forms a SNARE complex, composed of VAMP8, SNAP29 and STX17, involved in fusion of autophagosome with lysosome. Interacts with multiple syntaxins including STX6. Interacts with EIPR1. Interacts with STX17; this interaction is increased in the absence of TMEM39A.

The protein localises to the cytoplasm. It localises to the golgi apparatus membrane. The protein resides in the cytoplasmic vesicle. Its subcellular location is the autophagosome membrane. It is found in the cell projection. The protein localises to the cilium membrane. Its function is as follows. SNAREs, soluble N-ethylmaleimide-sensitive factor-attachment protein receptors, are essential proteins for fusion of cellular membranes. SNAREs localized on opposing membranes assemble to form a trans-SNARE complex, an extended, parallel four alpha-helical bundle that drives membrane fusion. SNAP29 is a SNARE involved in autophagy through the direct control of autophagosome membrane fusion with the lysososome membrane. Also plays a role in ciliogenesis by regulating membrane fusions. This is Synaptosomal-associated protein 29 from Bos taurus (Bovine).